Consider the following 311-residue polypeptide: tRNA-cytidine(32) 2-sulfurtransferase (311 aa).

The short motif at 47 to 52 (SGGKDS) is the PP-loop motif element. [4Fe-4S] cluster-binding residues include cysteine 122, cysteine 125, and cysteine 213.

Belongs to the TtcA family. In terms of assembly, homodimer. It depends on Mg(2+) as a cofactor. The cofactor is [4Fe-4S] cluster.

The protein resides in the cytoplasm. It carries out the reaction cytidine(32) in tRNA + S-sulfanyl-L-cysteinyl-[cysteine desulfurase] + AH2 + ATP = 2-thiocytidine(32) in tRNA + L-cysteinyl-[cysteine desulfurase] + A + AMP + diphosphate + H(+). The protein operates within tRNA modification. In terms of biological role, catalyzes the ATP-dependent 2-thiolation of cytidine in position 32 of tRNA, to form 2-thiocytidine (s(2)C32). The sulfur atoms are provided by the cysteine/cysteine desulfurase (IscS) system. The sequence is that of tRNA-cytidine(32) 2-sulfurtransferase from Salmonella heidelberg (strain SL476).